A 148-amino-acid chain; its full sequence is Probable histone H2B.1 (148 aa).

Residues 1-32 show a composition bias toward basic and acidic residues; sequence MAPKGEKKPAEKKPAEEKKSTVAEKAPAEKKP. The tract at residues 1-57 is disordered; that stretch reads MAPKGEKKPAEKKPAEEKKSTVAEKAPAEKKPKAGKKLPKEGGSAAGEKKKKRSKKS. 3 positions are modified to N6-acetyllysine: K7, K36, and K37. K144 is covalently cross-linked (Glycyl lysine isopeptide (Lys-Gly) (interchain with G-Cter in ubiquitin)).

Belongs to the histone H2B family. In terms of assembly, the nucleosome is a histone octamer containing two molecules each of H2A, H2B, H3 and H4 assembled in one H3-H4 heterotetramer and two H2A-H2B heterodimers. The octamer wraps approximately 147 bp of DNA. In terms of processing, can be acetylated to form H2BK6ac, H2BK33ac and H2BK34ac. Post-translationally, monoubiquitinated to form H2BK143ub1; may give a specific tag for epigenetic transcriptional activation.

The protein resides in the nucleus. It is found in the chromosome. Its function is as follows. Core component of nucleosome. Nucleosomes wrap and compact DNA into chromatin, limiting DNA accessibility to the cellular machineries which require DNA as a template. Histones thereby play a central role in transcription regulation, DNA repair, DNA replication and chromosomal stability. DNA accessibility is regulated via a complex set of post-translational modifications of histones, also called histone code, and nucleosome remodeling. In Medicago truncatula (Barrel medic), this protein is Probable histone H2B.1.